The primary structure comprises 191 residues: Fe/S biogenesis protein NfuA (191 aa).

The [4Fe-4S] cluster site is built by cysteine 149 and cysteine 152.

It belongs to the NfuA family. In terms of assembly, homodimer. It depends on [4Fe-4S] cluster as a cofactor.

Its function is as follows. Involved in iron-sulfur cluster biogenesis. Binds a 4Fe-4S cluster, can transfer this cluster to apoproteins, and thereby intervenes in the maturation of Fe/S proteins. Could also act as a scaffold/chaperone for damaged Fe/S proteins. The protein is Fe/S biogenesis protein NfuA of Cronobacter sakazakii (strain ATCC BAA-894) (Enterobacter sakazakii).